The primary structure comprises 176 residues: NAD(P)H-quinone oxidoreductase subunit 6, chloroplastic (176 aa).

The next 5 membrane-spanning stretches (helical) occupy residues 10–30 (FLLV…ILFT), 33–53 (IFSA…YIIA), 61–81 (AQLL…VMFI), 92–112 (LFTL…FLLI), and 152–172 (FFPP…GAIA).

The protein belongs to the complex I subunit 6 family. In terms of assembly, NDH is composed of at least 16 different subunits, 5 of which are encoded in the nucleus.

The protein localises to the plastid. It is found in the chloroplast thylakoid membrane. It carries out the reaction a plastoquinone + NADH + (n+1) H(+)(in) = a plastoquinol + NAD(+) + n H(+)(out). The enzyme catalyses a plastoquinone + NADPH + (n+1) H(+)(in) = a plastoquinol + NADP(+) + n H(+)(out). In terms of biological role, NDH shuttles electrons from NAD(P)H:plastoquinone, via FMN and iron-sulfur (Fe-S) centers, to quinones in the photosynthetic chain and possibly in a chloroplast respiratory chain. The immediate electron acceptor for the enzyme in this species is believed to be plastoquinone. Couples the redox reaction to proton translocation, and thus conserves the redox energy in a proton gradient. The protein is NAD(P)H-quinone oxidoreductase subunit 6, chloroplastic (ndhG) of Fagopyrum esculentum subsp. ancestrale (Wild buckwheat).